Reading from the N-terminus, the 444-residue chain is Sonic hedgehog protein (444 aa).

Positions 1 to 24 (MLVATQSLLLLSFICTLVTPPGLA) are cleaved as a signal peptide. Cys-25 carries N-palmitoyl cysteine lipidation. The Cardin-Weintraub motif lies at 33-39 (KRRHPKK). The Ca(2+) site is built by Glu-90, Glu-91, Asp-96, Thr-126, Glu-127, Asp-130, and Asp-132. Zn(2+)-binding residues include His-141, Asp-148, and His-183. A lipid anchor (Cholesterol glycine ester) is attached at Gly-198. A run of 3 repeats spans residues 386 to 393 (QVDLQSHH), 394 to 401 (QVDLQSHH), and 403 to 409 (VDLQSHH). The segment at 386 to 409 (QVDLQSHHQVDLQSHHQVDLQSHH) is 3 X 8 AA tandem repeats of Q-V-D-L-Q-S-H-H.

This sequence belongs to the hedgehog family. Interacts with HHATL/GUP1 which negatively regulates HHAT-mediated palmitoylation of the SHH N-terminus. Interacts with BOC and CDON. Interacts with HHIP. Interacts with DISP1 via its cholesterol anchor. Interacts with SCUBE2. As to quaternary structure, multimer. The C-terminal domain displays an autoproteolysis activity and a cholesterol transferase activity. Both activities result in the cleavage of the full-length protein and covalent attachment of a cholesterol moiety to the C-terminal of the newly generated N-terminal fragment (ShhN). Cholesterylation is required for the sonic hedgehog protein N-product targeting to lipid rafts and multimerization. ShhN is the active species in both local and long-range signaling, whereas the C-product (ShhC) is degraded in the reticulum endoplasmic. In terms of processing, N-palmitoylation by HHAT of ShhN is required for sonic hedgehog protein N-product multimerization and full activity. It is a prerequisite for the membrane-proximal positioning and the subsequent shedding of this N-terminal peptide. Post-translationally, the lipidated N- and C-terminal peptides of ShhNp can be cleaved (shedding). The N-terminal palmitoylated peptide is cleaved at the Cardin-Weintraub (CW) motif site. The cleavage reduced the interactions with heparan sulfate. The cleavage is enhanced by SCUBE2. In terms of tissue distribution, strongly expressed in notochord and neural floor plate during embryogenesis. In tadpole, high expression is observed in pancreas/stomach, moderate expression in tail, and low expression in intestine, brain, and hind limb.

Its subcellular location is the endoplasmic reticulum membrane. The protein localises to the golgi apparatus membrane. It is found in the cell membrane. It carries out the reaction glycyl-L-cysteinyl-[protein] + cholesterol + H(+) = [protein]-C-terminal glycyl cholesterol ester + N-terminal L-cysteinyl-[protein]. Its function is as follows. The C-terminal part of the sonic hedgehog protein precursor displays an autoproteolysis and a cholesterol transferase activity. Both activities result in the cleavage of the full-length protein into two parts (ShhN and ShhC) followed by the covalent attachment of a cholesterol moiety to the C-terminal of the newly generated ShhN. Both activities occur in the endoplasmic reticulum. Once cleaved, ShhC is degraded in the endoplasmic reticulum. In terms of biological role, the dually lipidated sonic hedgehog protein N-product (ShhNp) is a morphogen which is essential for a variety of patterning events during development. Induces ventral cell fate in the neural tube and somites. Involved in the patterning of the anterior-posterior axis of the developing limb bud. Essential for axon guidance. Binds to the patched (PTCH1) receptor, which functions in association with smoothened (SMO), to activate the transcription of target genes. In the absence of SHH, PTCH1 represses the constitutive signaling activity of SMO. In Xenopus laevis (African clawed frog), this protein is Sonic hedgehog protein.